The primary structure comprises 82 residues: Phosphoribosylformylglycinamidine synthase subunit PurS (82 aa).

The protein belongs to the PurS family. Homodimer. Part of the FGAM synthase complex composed of 1 PurL, 1 PurQ and 2 PurS subunits.

The protein localises to the cytoplasm. It carries out the reaction N(2)-formyl-N(1)-(5-phospho-beta-D-ribosyl)glycinamide + L-glutamine + ATP + H2O = 2-formamido-N(1)-(5-O-phospho-beta-D-ribosyl)acetamidine + L-glutamate + ADP + phosphate + H(+). The protein operates within purine metabolism; IMP biosynthesis via de novo pathway; 5-amino-1-(5-phospho-D-ribosyl)imidazole from N(2)-formyl-N(1)-(5-phospho-D-ribosyl)glycinamide: step 1/2. In terms of biological role, part of the phosphoribosylformylglycinamidine synthase complex involved in the purines biosynthetic pathway. Catalyzes the ATP-dependent conversion of formylglycinamide ribonucleotide (FGAR) and glutamine to yield formylglycinamidine ribonucleotide (FGAM) and glutamate. The FGAM synthase complex is composed of three subunits. PurQ produces an ammonia molecule by converting glutamine to glutamate. PurL transfers the ammonia molecule to FGAR to form FGAM in an ATP-dependent manner. PurS interacts with PurQ and PurL and is thought to assist in the transfer of the ammonia molecule from PurQ to PurL. In Thermotoga maritima (strain ATCC 43589 / DSM 3109 / JCM 10099 / NBRC 100826 / MSB8), this protein is Phosphoribosylformylglycinamidine synthase subunit PurS.